We begin with the raw amino-acid sequence, 355 residues long: Glucokinase (355 aa).

Glycine 11–threonine 16 lines the ATP pocket.

Belongs to the bacterial glucokinase family.

It is found in the cytoplasm. It catalyses the reaction D-glucose + ATP = D-glucose 6-phosphate + ADP + H(+). The protein is Glucokinase of Synechocystis sp. (strain ATCC 27184 / PCC 6803 / Kazusa).